Reading from the N-terminus, the 213-residue chain is ATP phosphoribosyltransferase (213 aa).

The protein belongs to the ATP phosphoribosyltransferase family. Short subfamily. Heteromultimer composed of HisG and HisZ subunits.

It is found in the cytoplasm. The catalysed reaction is 1-(5-phospho-beta-D-ribosyl)-ATP + diphosphate = 5-phospho-alpha-D-ribose 1-diphosphate + ATP. It functions in the pathway amino-acid biosynthesis; L-histidine biosynthesis; L-histidine from 5-phospho-alpha-D-ribose 1-diphosphate: step 1/9. Its function is as follows. Catalyzes the condensation of ATP and 5-phosphoribose 1-diphosphate to form N'-(5'-phosphoribosyl)-ATP (PR-ATP). Has a crucial role in the pathway because the rate of histidine biosynthesis seems to be controlled primarily by regulation of HisG enzymatic activity. The chain is ATP phosphoribosyltransferase from Listeria monocytogenes serotype 4a (strain HCC23).